Here is a 712-residue protein sequence, read N- to C-terminus: Cyclolysin secretion/processing ATP-binding protein CyaB (712 aa).

Residues 7 to 128 (QCASVPDSGL…ALWAGELLLC (122 aa)) enclose the Peptidase C39 domain. The region spanning 157–439 (IGEVLLISLV…LAQLWNDFQQ (283 aa)) is the ABC transmembrane type-1 domain. The next 6 helical transmembrane spans lie at 160-180 (VLLI…FFQV), 194-214 (LNVI…LTGI), 272-292 (AVTV…MFFY), 298-318 (LVVL…TPVL), 367-387 (VAAG…VTLI), and 390-410 (LVAL…RMTV). Residues 471 to 706 (IELDRVSFRY…GGLYARLQAL (236 aa)) enclose the ABC transporter domain. 505 to 512 (GRSGSGKS) is an ATP binding site.

Belongs to the ABC transporter superfamily. Cyclolysin exporter (TC 3.A.1.109.2) family.

It is found in the cell membrane. Functionally, involved in the export of calmodulin-sensitive adenylate cyclase-hemolysin (cyclolysin). The polypeptide is Cyclolysin secretion/processing ATP-binding protein CyaB (cyaB) (Bordetella pertussis (strain Tohama I / ATCC BAA-589 / NCTC 13251)).